The chain runs to 155 residues: Protein-export protein SecB 1 (155 aa).

The protein belongs to the SecB family. As to quaternary structure, homotetramer, a dimer of dimers. One homotetramer interacts with 1 SecA dimer.

The protein localises to the cytoplasm. Its function is as follows. One of the proteins required for the normal export of preproteins out of the cell cytoplasm. It is a molecular chaperone that binds to a subset of precursor proteins, maintaining them in a translocation-competent state. It also specifically binds to its receptor SecA. The polypeptide is Protein-export protein SecB 1 (Polaromonas naphthalenivorans (strain CJ2)).